Reading from the N-terminus, the 209-residue chain is Ribonuclease HII (209 aa).

Positions 20–209 constitute an RNase H type-2 domain; the sequence is DSEIGIDEVG…KSFLNKLNLI (190 aa). Residues Asp26, Glu27, and Asp122 each contribute to the a divalent metal cation site.

Belongs to the RNase HII family. Requires Mn(2+) as cofactor. Mg(2+) serves as cofactor.

Its subcellular location is the cytoplasm. The catalysed reaction is Endonucleolytic cleavage to 5'-phosphomonoester.. Functionally, endonuclease that specifically degrades the RNA of RNA-DNA hybrids. The polypeptide is Ribonuclease HII (Prochlorococcus marinus subsp. pastoris (strain CCMP1986 / NIES-2087 / MED4)).